The primary structure comprises 249 residues: 3-deoxy-manno-octulosonate cytidylyltransferase (249 aa).

This sequence belongs to the KdsB family.

Its subcellular location is the cytoplasm. The catalysed reaction is 3-deoxy-alpha-D-manno-oct-2-ulosonate + CTP = CMP-3-deoxy-beta-D-manno-octulosonate + diphosphate. The protein operates within nucleotide-sugar biosynthesis; CMP-3-deoxy-D-manno-octulosonate biosynthesis; CMP-3-deoxy-D-manno-octulosonate from 3-deoxy-D-manno-octulosonate and CTP: step 1/1. Its pathway is bacterial outer membrane biogenesis; lipopolysaccharide biosynthesis. In terms of biological role, activates KDO (a required 8-carbon sugar) for incorporation into bacterial lipopolysaccharide in Gram-negative bacteria. The polypeptide is 3-deoxy-manno-octulosonate cytidylyltransferase (Aliivibrio fischeri (strain ATCC 700601 / ES114) (Vibrio fischeri)).